A 128-amino-acid chain; its full sequence is Large ribosomal subunit protein bL20c (128 aa).

Belongs to the bacterial ribosomal protein bL20 family.

The protein localises to the plastid. The protein resides in the chloroplast. In terms of biological role, binds directly to 23S ribosomal RNA and is necessary for the in vitro assembly process of the 50S ribosomal subunit. It is not involved in the protein synthesizing functions of that subunit. This chain is Large ribosomal subunit protein bL20c, found in Daucus carota (Wild carrot).